The sequence spans 230 residues: Demethylmenaquinone methyltransferase (230 aa).

S-adenosyl-L-methionine contacts are provided by residues Thr62, Asp80, 100–101, and Ser117; that span reads DG.

This sequence belongs to the class I-like SAM-binding methyltransferase superfamily. MenG/UbiE family.

It carries out the reaction a 2-demethylmenaquinol + S-adenosyl-L-methionine = a menaquinol + S-adenosyl-L-homocysteine + H(+). The protein operates within quinol/quinone metabolism; menaquinone biosynthesis; menaquinol from 1,4-dihydroxy-2-naphthoate: step 2/2. Methyltransferase required for the conversion of demethylmenaquinol (DMKH2) to menaquinol (MKH2). The chain is Demethylmenaquinone methyltransferase from Corynebacterium urealyticum (strain ATCC 43042 / DSM 7109).